Here is a 419-residue protein sequence, read N- to C-terminus: UDP-N-acetylglucosamine 1-carboxyvinyltransferase (419 aa).

22–23 (KN) contributes to the phosphoenolpyruvate binding site. UDP-N-acetyl-alpha-D-glucosamine is bound at residue arginine 91. Catalysis depends on cysteine 115, which acts as the Proton donor. Position 115 is a 2-(S-cysteinyl)pyruvic acid O-phosphothioketal (cysteine 115). UDP-N-acetyl-alpha-D-glucosamine is bound by residues 120 to 124 (RPVDL), 160 to 163 (KVSV), aspartate 305, and isoleucine 327.

It belongs to the EPSP synthase family. MurA subfamily.

The protein resides in the cytoplasm. The catalysed reaction is phosphoenolpyruvate + UDP-N-acetyl-alpha-D-glucosamine = UDP-N-acetyl-3-O-(1-carboxyvinyl)-alpha-D-glucosamine + phosphate. The protein operates within cell wall biogenesis; peptidoglycan biosynthesis. Functionally, cell wall formation. Adds enolpyruvyl to UDP-N-acetylglucosamine. This Cronobacter sakazakii (strain ATCC BAA-894) (Enterobacter sakazakii) protein is UDP-N-acetylglucosamine 1-carboxyvinyltransferase.